Consider the following 100-residue polypeptide: Urease subunit gamma (100 aa).

Belongs to the urease gamma subunit family. In terms of assembly, heterotrimer of UreA (gamma), UreB (beta) and UreC (alpha) subunits. Three heterotrimers associate to form the active enzyme.

It localises to the cytoplasm. It carries out the reaction urea + 2 H2O + H(+) = hydrogencarbonate + 2 NH4(+). It participates in nitrogen metabolism; urea degradation; CO(2) and NH(3) from urea (urease route): step 1/1. The protein is Urease subunit gamma of Herpetosiphon aurantiacus (strain ATCC 23779 / DSM 785 / 114-95).